We begin with the raw amino-acid sequence, 424 residues long: Histidine--tRNA ligase (424 aa).

It belongs to the class-II aminoacyl-tRNA synthetase family. As to quaternary structure, homodimer.

It localises to the cytoplasm. It catalyses the reaction tRNA(His) + L-histidine + ATP = L-histidyl-tRNA(His) + AMP + diphosphate + H(+). This is Histidine--tRNA ligase from Salmonella gallinarum (strain 287/91 / NCTC 13346).